The chain runs to 587 residues: Pectinesterase 2 (587 aa).

The N-terminal stretch at 1–40 (MAPIKEFISKFSDFKNNKKLILSSAAIALLLLASIVGIAA) is a signal peptide. Residues Asn99 and Asn218 are each glycosylated (N-linked (GlcNAc...) asparagine). Residues Thr351 and Gln381 each contribute to the substrate site. The active-site Proton donor is Asp404. Cys418 and Cys438 are oxidised to a cystine. The active-site Nucleophile is Asp425. Substrate-binding residues include Arg493 and Trp495.

This sequence in the N-terminal section; belongs to the PMEI family. The protein in the C-terminal section; belongs to the pectinesterase family. In terms of tissue distribution, expressed in flower buds.

It is found in the secreted. The protein resides in the cell wall. It catalyses the reaction [(1-&gt;4)-alpha-D-galacturonosyl methyl ester](n) + n H2O = [(1-&gt;4)-alpha-D-galacturonosyl](n) + n methanol + n H(+). It participates in glycan metabolism; pectin degradation; 2-dehydro-3-deoxy-D-gluconate from pectin: step 1/5. Its function is as follows. Acts in the modification of cell walls via demethylesterification of cell wall pectin. In Arabidopsis thaliana (Mouse-ear cress), this protein is Pectinesterase 2 (PME2).